Here is a 256-residue protein sequence, read N- to C-terminus: Triosephosphate isomerase (256 aa).

9–11 (NWK) lines the substrate pocket. His-97 acts as the Electrophile in catalysis. The Proton acceptor role is filled by Glu-169. Substrate-binding positions include Gly-175, Ser-214, and 235-236 (GG).

It belongs to the triosephosphate isomerase family. Homodimer.

It is found in the cytoplasm. It catalyses the reaction D-glyceraldehyde 3-phosphate = dihydroxyacetone phosphate. The protein operates within carbohydrate biosynthesis; gluconeogenesis. Its pathway is carbohydrate degradation; glycolysis; D-glyceraldehyde 3-phosphate from glycerone phosphate: step 1/1. Involved in the gluconeogenesis. Catalyzes stereospecifically the conversion of dihydroxyacetone phosphate (DHAP) to D-glyceraldehyde-3-phosphate (G3P). This is Triosephosphate isomerase from Aliivibrio fischeri (strain ATCC 700601 / ES114) (Vibrio fischeri).